Reading from the N-terminus, the 218-residue chain is Cytochrome c biogenesis ATP-binding export protein CcmA (218 aa).

Positions 2–217 constitute an ABC transporter domain; it reads LEAKNLTCIR…KSCLSACCAV (216 aa). ATP is bound at residue 34–41; the sequence is GPNGAGKT.

It belongs to the ABC transporter superfamily. CcmA exporter (TC 3.A.1.107) family. In terms of assembly, the complex is composed of two ATP-binding proteins (CcmA) and two transmembrane proteins (CcmB).

The protein resides in the cell inner membrane. The catalysed reaction is heme b(in) + ATP + H2O = heme b(out) + ADP + phosphate + H(+). Its function is as follows. Part of the ABC transporter complex CcmAB involved in the biogenesis of c-type cytochromes; once thought to export heme, this seems not to be the case, but its exact role is uncertain. Responsible for energy coupling to the transport system. In Yersinia pseudotuberculosis serotype I (strain IP32953), this protein is Cytochrome c biogenesis ATP-binding export protein CcmA.